Consider the following 603-residue polypeptide: Probable lysosomal cobalamin transporter (603 aa).

The next 9 membrane-spanning stretches (helical) occupy residues 13–33, 50–70, 99–119, 150–170, 201–221, 318–338, 353–373, 381–401, and 422–442; these read IWVA…ITVF, IVSL…IALV, IVYY…IPFA, IAFI…PTAA, LLMT…LALL, LFGG…MLIT, GYIL…VKAA, ILMA…IASV, and ALLI…YAVV. N509 carries an N-linked (GlcNAc...) asparagine glycan. The chain crosses the membrane as a helical span at residues 512 to 532; the sequence is VFGAIDFWAQFAFLTVFLLVF. A glycan (N-linked (GlcNAc...) asparagine) is linked at N543. Residues 578 to 603 form a disordered region; the sequence is AKRTVGGHPNGQGYGTSGTNGTASSR. Gly residues predominate over residues 585 to 595; that stretch reads HPNGQGYGTSG. An N-linked (GlcNAc...) asparagine glycan is attached at N597.

The protein belongs to the LIMR family. LMBRD1 subfamily.

It localises to the lysosome membrane. In terms of biological role, probable lysosomal cobalamin transporter. Required to export cobalamin from lysosomes allowing its conversion to cofactors. This is Probable lysosomal cobalamin transporter from Neurospora crassa (strain ATCC 24698 / 74-OR23-1A / CBS 708.71 / DSM 1257 / FGSC 987).